The following is a 290-amino-acid chain: Shikimate dehydrogenase (NADP(+)) (290 aa).

Residues 21 to 23 and Thr68 each bind shikimate; that span reads SLS. The Proton acceptor role is filled by Lys72. Glu84 contributes to the NADP(+) binding site. Shikimate contacts are provided by Asn93 and Asp108. NADP(+) is bound by residues 132 to 136 and Leu230; that span reads GYGGA. Residue Tyr232 coordinates shikimate. Gly253 contacts NADP(+).

Belongs to the shikimate dehydrogenase family. In terms of assembly, homodimer.

It catalyses the reaction shikimate + NADP(+) = 3-dehydroshikimate + NADPH + H(+). It participates in metabolic intermediate biosynthesis; chorismate biosynthesis; chorismate from D-erythrose 4-phosphate and phosphoenolpyruvate: step 4/7. Functionally, involved in the biosynthesis of the chorismate, which leads to the biosynthesis of aromatic amino acids. Catalyzes the reversible NADPH linked reduction of 3-dehydroshikimate (DHSA) to yield shikimate (SA). The sequence is that of Shikimate dehydrogenase (NADP(+)) from Synechocystis sp. (strain ATCC 27184 / PCC 6803 / Kazusa).